A 217-amino-acid chain; its full sequence is Phosphatase MT3486 (217 aa).

Catalysis depends on D9, which acts as the Nucleophile.

The protein belongs to the HAD-like hydrolase superfamily.

Its function is as follows. Able to hydrolyze geranyl diphosphate (GPP), farnesyl diphosphate (FPP) and geranylgeranyl diphosphate (GGPP) to respectively yield geraniol, farnesol and geranylgeraniol. The chain is Phosphatase MT3486 from Mycobacterium tuberculosis (strain CDC 1551 / Oshkosh).